The primary structure comprises 313 residues: Transcription initiation factor IIB 2 (313 aa).

The TFIIB-type zinc finger occupies 13 to 44; it reads APKRCPECHSEHLIRDYEHGELICADCGAVIE. 4 residues coordinate Zn(2+): C17, C20, C36, and C39. 2 consecutive repeat copies span residues 130 to 213 and 224 to 305.

It belongs to the TFIIB family.

Functionally, stabilizes TBP binding to an archaeal box-A promoter. Also responsible for recruiting RNA polymerase II to the pre-initiation complex (DNA-TBP-TFIIB). This is Transcription initiation factor IIB 2 from Thermoplasma volcanium (strain ATCC 51530 / DSM 4299 / JCM 9571 / NBRC 15438 / GSS1).